Consider the following 392-residue polypeptide: Formate-dependent phosphoribosylglycinamide formyltransferase (392 aa).

Residues 22–23 (EL) and E82 contribute to the N(1)-(5-phospho-beta-D-ribosyl)glycinamide site. Residues R114, K155, 160 to 165 (SSGKGQ), 195 to 198 (EGVV), and E203 contribute to the ATP site. One can recognise an ATP-grasp domain in the interval 119–308 (RLAAEELGLP…EFALHVRAFL (190 aa)). Positions 267 and 279 each coordinate Mg(2+). Residues D286, K355, and 362–363 (RR) contribute to the N(1)-(5-phospho-beta-D-ribosyl)glycinamide site.

This sequence belongs to the PurK/PurT family. Homodimer.

It carries out the reaction N(1)-(5-phospho-beta-D-ribosyl)glycinamide + formate + ATP = N(2)-formyl-N(1)-(5-phospho-beta-D-ribosyl)glycinamide + ADP + phosphate + H(+). The protein operates within purine metabolism; IMP biosynthesis via de novo pathway; N(2)-formyl-N(1)-(5-phospho-D-ribosyl)glycinamide from N(1)-(5-phospho-D-ribosyl)glycinamide (formate route): step 1/1. Involved in the de novo purine biosynthesis. Catalyzes the transfer of formate to 5-phospho-ribosyl-glycinamide (GAR), producing 5-phospho-ribosyl-N-formylglycinamide (FGAR). Formate is provided by PurU via hydrolysis of 10-formyl-tetrahydrofolate. The polypeptide is Formate-dependent phosphoribosylglycinamide formyltransferase (Salmonella dublin (strain CT_02021853)).